The primary structure comprises 130 residues: MIGNWNYGTGRRKSAVARVFIKAGKGDIVVNGKPISDYFSRETSLMIVRQPLELTNHAQTFDIKVNVSGGGETGQAGAVRHGITRALIDYDATLKPALSKAGFVTRDAREVERKKVGLHKARRAKQFSKR.

Belongs to the universal ribosomal protein uS9 family.

This Burkholderia pseudomallei (strain K96243) protein is Small ribosomal subunit protein uS9.